A 97-amino-acid chain; its full sequence is U-scoloptoxin(10)-Ssd2a (97 aa).

A signal peptide spans 1 to 23; sequence MNKSMLIFFTILFLTYIIEEKEA.

Contains 3 disulfide bonds. Expressed by the venom gland.

The protein localises to the secreted. The chain is U-scoloptoxin(10)-Ssd2a from Scolopendra dehaani (Thai centipede).